The chain runs to 1203 residues: Delphilin (1203 aa).

A PDZ 1 domain is found at 1-79 (MPATNQGWPE…VPPSLGVLPG (79 aa)). Alanine 3 carries S-palmitoyl cysteine lipidation. A disordered region spans residues 215 to 270 (GAQRLRRSRSEERPERLLVSTRASAAPRRPDEPPPRKATSLLGGRTGPGGPRRTVR). Residues 231–241 (LLVSTRASAAP) are compositionally biased toward low complexity. The region spanning 268–345 (TVRVYKGNKS…MPTLVVEEGP (78 aa)) is the PDZ 2 domain. Serine 303 is modified (phosphoserine). Disordered stretches follow at residues 466–541 (ESSL…TPNP), 563–586 (IGTM…GPRT), 611–656 (LASP…PPSR), and 710–821 (SFVT…SHMS). A compositionally biased stretch (polar residues) spans 500 to 509 (RSQGLETSLS). Serine 572, serine 613, serine 644, and serine 647 each carry phosphoserine. Residues 611–625 (LASPSSSESHPYASL) show a composition bias toward low complexity. Over residues 715–740 (ERSSASECVSSSEEGSSLTYSSISDH) the composition is skewed to low complexity. The segment covering 741–756 (IPPPPLSPPPPPPLPF) has biased composition (pro residues). A compositionally biased stretch (polar residues) spans 774–784 (QSLTKPLTQIN). Positions 786 to 803 (PVPPPPPPPLPPPVPCAP) are enriched in pro residues. The FH2 domain occupies 812–1203 (HRRSETSHMS…SSGMVSPLAW (392 aa)).

Interacts with C-terminus of the glutamate receptor GRID2 via PDZ domain. Isoform 2 also interacts with Profilin-2/PFN2 and with the monocarboxylate transporter SLC16A7 via PDZ domain. The interaction of isoform 2 with GRID2 is dependent on GRID2 phosphorylation by PKA. Isoform 2 is palmitoylated. Palmitoylation of isoform 2 is necessary for the enhanced cell surface expression of GRID2, and is also responsible for the accumulation of isoform 2 within dendritic spines. Isoform 1 and isoform 2 are differentially localized, probably modulating GRID2 signaling in neurons. In terms of tissue distribution, isoform 1 is expressed in the cerebellum, but not in the cerebral cortex. Isoform 2 is expressed in the cell body of purkinge cells of the cerebellum and weakly expressed in the cerebrum and the brainstem as well as various nuclei of the thalamus. Isoform 2 is highly expressed in the cerebral cortex than in the cerebellum. Isoform 3 is expressed in the cerebellum and cerebrum.

Its subcellular location is the postsynaptic cell membrane. The protein localises to the cell projection. The protein resides in the dendritic spine. It localises to the synapse. It is found in the cell membrane. Postsynaptic scaffolding protein at the Purkinje cell synapse, where it may serve to link GRID2 with actin cytoskeleton and various signaling molecules. This chain is Delphilin (Grid2ip), found in Mus musculus (Mouse).